The sequence spans 208 residues: UPF0637 protein lp_2332 (208 aa).

It belongs to the UPF0637 family.

The chain is UPF0637 protein lp_2332 from Lactiplantibacillus plantarum (strain ATCC BAA-793 / NCIMB 8826 / WCFS1) (Lactobacillus plantarum).